The primary structure comprises 148 residues: SsrA-binding protein (148 aa).

Residues 127–142 (KRESEKERDWERDKAR) are compositionally biased toward basic and acidic residues. Residues 127–148 (KRESEKERDWERDKARLMRVKT) are disordered.

It belongs to the SmpB family.

The protein resides in the cytoplasm. Its function is as follows. Required for rescue of stalled ribosomes mediated by trans-translation. Binds to transfer-messenger RNA (tmRNA), required for stable association of tmRNA with ribosomes. tmRNA and SmpB together mimic tRNA shape, replacing the anticodon stem-loop with SmpB. tmRNA is encoded by the ssrA gene; the 2 termini fold to resemble tRNA(Ala) and it encodes a 'tag peptide', a short internal open reading frame. During trans-translation Ala-aminoacylated tmRNA acts like a tRNA, entering the A-site of stalled ribosomes, displacing the stalled mRNA. The ribosome then switches to translate the ORF on the tmRNA; the nascent peptide is terminated with the 'tag peptide' encoded by the tmRNA and targeted for degradation. The ribosome is freed to recommence translation, which seems to be the essential function of trans-translation. In Aromatoleum aromaticum (strain DSM 19018 / LMG 30748 / EbN1) (Azoarcus sp. (strain EbN1)), this protein is SsrA-binding protein.